The chain runs to 570 residues: Formate--tetrahydrofolate ligase (570 aa).

65–72 contacts ATP; the sequence is TPYGEGKT.

It belongs to the formate--tetrahydrofolate ligase family.

The catalysed reaction is (6S)-5,6,7,8-tetrahydrofolate + formate + ATP = (6R)-10-formyltetrahydrofolate + ADP + phosphate. It participates in one-carbon metabolism; tetrahydrofolate interconversion. In Shewanella piezotolerans (strain WP3 / JCM 13877), this protein is Formate--tetrahydrofolate ligase.